Here is a 97-residue protein sequence, read N- to C-terminus: Large ribosomal subunit protein uL23 (97 aa).

The protein belongs to the universal ribosomal protein uL23 family. Part of the 50S ribosomal subunit. Contacts protein L29, and trigger factor when it is bound to the ribosome.

In terms of biological role, one of the early assembly proteins it binds 23S rRNA. One of the proteins that surrounds the polypeptide exit tunnel on the outside of the ribosome. Forms the main docking site for trigger factor binding to the ribosome. The polypeptide is Large ribosomal subunit protein uL23 (Marinobacter nauticus (strain ATCC 700491 / DSM 11845 / VT8) (Marinobacter aquaeolei)).